The primary structure comprises 189 residues: Elongation factor P (189 aa).

N6-(3,6-diaminohexanoyl)-5-hydroxylysine is present on Lys-34.

The protein belongs to the elongation factor P family. In terms of processing, may be beta-lysylated on the epsilon-amino group of Lys-34 by the combined action of EpmA and EpmB, and then hydroxylated on the C5 position of the same residue by EpmC (if this protein is present). Lysylation is critical for the stimulatory effect of EF-P on peptide-bond formation. The lysylation moiety may extend toward the peptidyltransferase center and stabilize the terminal 3-CCA end of the tRNA. Hydroxylation of the C5 position on Lys-34 may allow additional potential stabilizing hydrogen-bond interactions with the P-tRNA.

The protein localises to the cytoplasm. Its pathway is protein biosynthesis; polypeptide chain elongation. In terms of biological role, involved in peptide bond synthesis. Alleviates ribosome stalling that occurs when 3 or more consecutive Pro residues or the sequence PPG is present in a protein, possibly by augmenting the peptidyl transferase activity of the ribosome. Modification of Lys-34 is required for alleviation. The protein is Elongation factor P of Acinetobacter baumannii (strain AB307-0294).